Here is a 478-residue protein sequence, read N- to C-terminus: Glutamine synthetase (478 aa).

Residue Lys14 forms an Isoglutamyl lysine isopeptide (Lys-Gln) (interchain with Q-Cter in protein Pup) linkage. Positions 16–100 constitute a GS beta-grasp domain; it reads ENVEYVDIRF…MNFFVHDPFT (85 aa). One can recognise a GS catalytic domain in the interval 108 to 478; that stretch reads PRNVARKAEN…PYEFSLYYDV (371 aa). Mg(2+)-binding residues include Glu133 and Glu135. ATP is bound at residue Glu214. Mg(2+) contacts are provided by Glu219 and Glu227. 230 to 232 contributes to the ATP binding site; that stretch reads YKF. Residues 271 to 272 and Gly272 contribute to the L-glutamate site; that span reads NG. A Mg(2+)-binding site is contributed by His276. Residues 278-280 and Ser280 each bind ATP; that span reads HQS. 3 residues coordinate L-glutamate: Arg329, Glu335, and Arg347. Residues Arg347, Arg352, and Lys361 each contribute to the ATP site. Glu366 contributes to the Mg(2+) binding site. Arg368 lines the L-glutamate pocket. Position 406 is an O-AMP-tyrosine (Tyr406).

This sequence belongs to the glutamine synthetase family. In terms of assembly, oligomer of 12 subunits arranged in the form of two hexagons. It depends on Mg(2+) as a cofactor.

The protein localises to the cytoplasm. The enzyme catalyses L-glutamate + NH4(+) + ATP = L-glutamine + ADP + phosphate + H(+). With respect to regulation, when cellular nitrogen levels are high, the C-terminal adenylyl transferase (AT) of GlnE inhibits GlnA by covalent transfer of an adenylyl group from ATP to Tyr-406. Conversely, when nitrogen levels are low, the N-terminal adenylyl removase (AR) of GlnE activates GlnA by removing the adenylyl group by phosphorolysis. The fully adenylated enzyme complex is inactive. Its function is as follows. Involved in nitrogen metabolism via ammonium assimilation. Catalyzes the ATP-dependent biosynthesis of glutamine from glutamate and ammonia. This chain is Glutamine synthetase, found in Mycolicibacterium smegmatis (strain ATCC 700084 / mc(2)155) (Mycobacterium smegmatis).